The chain runs to 600 residues: Potassium-transporting ATPase potassium-binding subunit (600 aa).

Transmembrane regions (helical) follow at residues 6–26 (IILL…LGTY), 65–85 (GYAI…YAVQ), 136–156 (ALSG…YALI), 179–199 (LYVL…QGVI), 283–303 (FSNL…CFTF), 314–334 (WAIL…VMGA), 367–387 (FGIS…CGAV), 419–439 (GLYG…LMIG), 458–478 (SLVI…AVVL), 523–543 (VMLA…VLAI), and 566–586 (LFIA…YVPA).

The protein belongs to the KdpA family. As to quaternary structure, the system is composed of three essential subunits: KdpA, KdpB and KdpC.

The protein resides in the cell inner membrane. Its function is as follows. Part of the high-affinity ATP-driven potassium transport (or Kdp) system, which catalyzes the hydrolysis of ATP coupled with the electrogenic transport of potassium into the cytoplasm. This subunit binds the periplasmic potassium ions and delivers the ions to the membrane domain of KdpB through an intramembrane tunnel. In Janthinobacterium sp. (strain Marseille) (Minibacterium massiliensis), this protein is Potassium-transporting ATPase potassium-binding subunit.